Reading from the N-terminus, the 185-residue chain is Large ribosomal subunit protein uL5 (185 aa).

This sequence belongs to the universal ribosomal protein uL5 family. As to quaternary structure, part of the 50S ribosomal subunit; part of the 5S rRNA/L5/L18/L25 subcomplex. Contacts the 5S rRNA and the P site tRNA. Forms a bridge to the 30S subunit in the 70S ribosome.

Functionally, this is one of the proteins that bind and probably mediate the attachment of the 5S RNA into the large ribosomal subunit, where it forms part of the central protuberance. In the 70S ribosome it contacts protein S13 of the 30S subunit (bridge B1b), connecting the 2 subunits; this bridge is implicated in subunit movement. Contacts the P site tRNA; the 5S rRNA and some of its associated proteins might help stabilize positioning of ribosome-bound tRNAs. This is Large ribosomal subunit protein uL5 from Azorhizobium caulinodans (strain ATCC 43989 / DSM 5975 / JCM 20966 / LMG 6465 / NBRC 14845 / NCIMB 13405 / ORS 571).